A 71-amino-acid chain; its full sequence is Protein SlyX homolog (71 aa).

Belongs to the SlyX family.

This chain is Protein SlyX homolog, found in Stutzerimonas stutzeri (strain A1501) (Pseudomonas stutzeri).